The chain runs to 363 residues: Pyrimidine monooxygenase RutA (363 aa).

FMN is bound by residues 49 to 50 (IK), N115, E124, 140 to 141 (RY), and S190.

It belongs to the NtaA/SnaA/DszA monooxygenase family. RutA subfamily.

The catalysed reaction is uracil + FMNH2 + NADH + O2 = (Z)-3-ureidoacrylate + FMN + NAD(+) + H2O + H(+). It carries out the reaction thymine + FMNH2 + NADH + O2 = (Z)-2-methylureidoacrylate + FMN + NAD(+) + H2O + H(+). Functionally, catalyzes the pyrimidine ring opening between N-3 and C-4 by an unusual flavin hydroperoxide-catalyzed mechanism, adding oxygen atoms in the process to yield ureidoacrylate peracid, that immediately reacts with FMN forming ureidoacrylate and FMN-N(5)-oxide. The FMN-N(5)-oxide reacts spontaneously with NADH to produce FMN. Requires the flavin reductase RutF to regenerate FMN in vivo. The polypeptide is Pyrimidine monooxygenase RutA (Rhizobium rhizogenes (strain K84 / ATCC BAA-868) (Agrobacterium radiobacter)).